The chain runs to 79 residues: UPF0654 protein C11D3.01c (79 aa).

The segment at 1 to 79 (MPNPGNVIGG…RAQEELENLE (79 aa)) is disordered. Basic and acidic residues predominate over residues 22 to 45 (EETKQREKEYLEEHEGEVGEEHQK).

This sequence belongs to the UPF0654 (con-6) family.

The protein is UPF0654 protein C11D3.01c of Schizosaccharomyces pombe (strain 972 / ATCC 24843) (Fission yeast).